The sequence spans 108 residues: DNA-binding protein HBbu (108 aa).

The protein belongs to the bacterial histone-like protein family.

In terms of biological role, histone-like DNA-binding protein which is capable of wrapping DNA to stabilize it, and thus to prevent its denaturation under extreme environmental conditions. The polypeptide is DNA-binding protein HBbu (hbb) (Borrelia andersonii (Borreliella andersonii)).